The primary structure comprises 374 residues: Chaperone protein DnaJ (374 aa).

Positions 4-68 (DYYDILGVSR…ETRARYDRFG (65 aa)) constitute a J domain. A CR-type zinc finger spans residues 133–215 (GGEKQIRITH…CGGNGQAQVT (83 aa)). Zn(2+) is bound by residues Cys-146, Cys-149, Cys-163, Cys-166, Cys-189, Cys-192, Cys-203, and Cys-206. CXXCXGXG motif repeat units follow at residues 146–153 (CTTCNGSG), 163–170 (CGTCGGAG), 189–196 (CPTCNGKG), and 203–210 (CETCGGNG).

It belongs to the DnaJ family. Homodimer. It depends on Zn(2+) as a cofactor.

The protein resides in the cytoplasm. In terms of biological role, participates actively in the response to hyperosmotic and heat shock by preventing the aggregation of stress-denatured proteins and by disaggregating proteins, also in an autonomous, DnaK-independent fashion. Unfolded proteins bind initially to DnaJ; upon interaction with the DnaJ-bound protein, DnaK hydrolyzes its bound ATP, resulting in the formation of a stable complex. GrpE releases ADP from DnaK; ATP binding to DnaK triggers the release of the substrate protein, thus completing the reaction cycle. Several rounds of ATP-dependent interactions between DnaJ, DnaK and GrpE are required for fully efficient folding. Also involved, together with DnaK and GrpE, in the DNA replication of plasmids through activation of initiation proteins. This is Chaperone protein DnaJ from Cyanothece sp. (strain PCC 7425 / ATCC 29141).